A 138-amino-acid polypeptide reads, in one-letter code: Protein PsiE homolog (138 aa).

The next 4 membrane-spanning stretches (helical) occupy residues 14-34 (LQAL…GLLI), 56-76 (YEML…ALII), 84-104 (HFPL…LIII), and 109-129 (AIST…FFIV).

The protein belongs to the PsiE family.

Its subcellular location is the cell membrane. This chain is Protein PsiE homolog, found in Bacillus velezensis (strain DSM 23117 / BGSC 10A6 / LMG 26770 / FZB42) (Bacillus amyloliquefaciens subsp. plantarum).